The sequence spans 169 residues: EP300-interacting inhibitor of differentiation 1 (169 aa).

The segment at Gly-31–Pro-50 is disordered. Residues Arg-54–Gln-120 form an interaction with NR0B2 region. Positions Leu-150–Glu-154 match the LXCXE motif motif.

As to quaternary structure, interacts via its LXCXE motif with the entire pocket region of RB1. Interacts with EP300, NR0B2 and TRIM27. As to expression, expressed in all adult tissues examined and during embryogenesis.

Its subcellular location is the nucleus. It is found in the cytoplasm. In terms of biological role, interacts with RB1 and EP300 and acts as a repressor of MYOD1 transactivation. Inhibits EP300 and CBP histone acetyltransferase activity. May be involved in coupling cell cycle exit to the transcriptional activation of genes required for cellular differentiation. May act as a candidate coinhibitory factor for NR0B2 that can be directly linked to transcription inhibitory mechanisms. This chain is EP300-interacting inhibitor of differentiation 1, found in Mus musculus (Mouse).